A 348-amino-acid polypeptide reads, in one-letter code: tRNA N6-adenosine threonylcarbamoyltransferase (348 aa).

Positions 111 and 115 each coordinate Fe cation. Substrate is bound by residues 134–138 (LISGG), D167, G180, and N277. D305 is a Fe cation binding site.

The protein belongs to the KAE1 / TsaD family. Requires Fe(2+) as cofactor.

The protein resides in the cytoplasm. It carries out the reaction L-threonylcarbamoyladenylate + adenosine(37) in tRNA = N(6)-L-threonylcarbamoyladenosine(37) in tRNA + AMP + H(+). In terms of biological role, required for the formation of a threonylcarbamoyl group on adenosine at position 37 (t(6)A37) in tRNAs that read codons beginning with adenine. Is involved in the transfer of the threonylcarbamoyl moiety of threonylcarbamoyl-AMP (TC-AMP) to the N6 group of A37, together with TsaE and TsaB. TsaD likely plays a direct catalytic role in this reaction. In Haemophilus ducreyi (strain 35000HP / ATCC 700724), this protein is tRNA N6-adenosine threonylcarbamoyltransferase.